Here is a 246-residue protein sequence, read N- to C-terminus: tRNA (guanine-N(1)-)-methyltransferase (246 aa).

Residues glycine 117 and 137–142 (IGDYVL) contribute to the S-adenosyl-L-methionine site.

The protein belongs to the RNA methyltransferase TrmD family. Homodimer.

It is found in the cytoplasm. It catalyses the reaction guanosine(37) in tRNA + S-adenosyl-L-methionine = N(1)-methylguanosine(37) in tRNA + S-adenosyl-L-homocysteine + H(+). In terms of biological role, specifically methylates guanosine-37 in various tRNAs. The chain is tRNA (guanine-N(1)-)-methyltransferase from Acinetobacter baumannii (strain ACICU).